The primary structure comprises 59 residues: Potassium channel toxin alpha-KTx 16.4 (59 aa).

Positions 1–22 are cleaved as a signal peptide; that stretch reads MKILSIVLIALIICSISICTEA. Cystine bridges form between Cys-30-Cys-51, Cys-36-Cys-56, and Cys-40-Cys-58.

This sequence belongs to the short scorpion toxin superfamily. Potassium channel inhibitor family. Alpha-KTx 16 subfamily. In terms of tissue distribution, expressed by the venom gland.

Its subcellular location is the secreted. Functionally, weak inhibitor of voltage-gated potassium channel hKv1.3/KCNA3. The protein is Potassium channel toxin alpha-KTx 16.4 of Mesobuthus eupeus (Lesser Asian scorpion).